A 325-amino-acid chain; its full sequence is Hydroxymethylglutaryl-CoA lyase, mitochondrial (325 aa).

A mitochondrion-targeting transit peptide spans 1–27; sequence MATVKKVLPRRLVGLATLRAVSTSSVG. In terms of domain architecture, Pyruvate carboxyltransferase spans 33-300; sequence VKIVEVGPRD…HTGVNLQKLL (268 aa). Arg41 contacts substrate. An a divalent metal cation-binding site is contributed by Asp42. N6-acetyllysine; alternate is present on Lys48. At Lys48 the chain carries N6-succinyllysine; alternate. An N6-acetyllysine modification is found at Lys111. Lys137 and Lys179 each carry N6-acetyllysine; alternate. N6-succinyllysine; alternate occurs at positions 137 and 179. The a divalent metal cation site is built by His233 and His235. Cys266 is a catalytic residue. Position 275 (Asn275) interacts with a divalent metal cation. The short motif at 323 to 325 is the Microbody targeting signal element; it reads CKL. N6-acetyllysine is present on Lys324.

Belongs to the HMG-CoA lyase family. As to quaternary structure, homodimer; disulfide-linked. Can also form homotetramers.

The protein resides in the mitochondrion matrix. Its subcellular location is the peroxisome. It catalyses the reaction (3S)-3-hydroxy-3-methylglutaryl-CoA = acetoacetate + acetyl-CoA. It functions in the pathway metabolic intermediate metabolism; (S)-3-hydroxy-3-methylglutaryl-CoA degradation; acetoacetate from (S)-3-hydroxy-3-methylglutaryl-CoA: step 1/1. Functionally, mitochondrial 3-hydroxy-3-methylglutaryl-CoA lyase that catalyzes a cation-dependent cleavage of (S)-3-hydroxy-3-methylglutaryl-CoA into acetyl-CoA and acetoacetate, a key step in ketogenesis. Terminal step in leucine catabolism. Ketone bodies (beta-hydroxybutyrate, acetoacetate and acetone) are essential as an alternative source of energy to glucose, as lipid precursors and as regulators of metabolism. The sequence is that of Hydroxymethylglutaryl-CoA lyase, mitochondrial (HMGCL) from Bos taurus (Bovine).